A 313-amino-acid chain; its full sequence is 4-hydroxy-3-methylbut-2-enyl diphosphate reductase (313 aa).

A [4Fe-4S] cluster-binding site is contributed by cysteine 12. Residues histidine 41 and histidine 74 each contribute to the (2E)-4-hydroxy-3-methylbut-2-enyl diphosphate site. Dimethylallyl diphosphate is bound by residues histidine 41 and histidine 74. Residues histidine 41 and histidine 74 each contribute to the isopentenyl diphosphate site. Residue cysteine 96 participates in [4Fe-4S] cluster binding. (2E)-4-hydroxy-3-methylbut-2-enyl diphosphate is bound at residue histidine 124. Histidine 124 contacts dimethylallyl diphosphate. Isopentenyl diphosphate is bound at residue histidine 124. Glutamate 126 acts as the Proton donor in catalysis. Threonine 167 provides a ligand contact to (2E)-4-hydroxy-3-methylbut-2-enyl diphosphate. [4Fe-4S] cluster is bound at residue cysteine 197. The (2E)-4-hydroxy-3-methylbut-2-enyl diphosphate site is built by serine 225, serine 226, asparagine 227, and serine 269. The dimethylallyl diphosphate site is built by serine 225, serine 226, asparagine 227, and serine 269. Residues serine 225, serine 226, asparagine 227, and serine 269 each coordinate isopentenyl diphosphate.

The protein belongs to the IspH family. The cofactor is [4Fe-4S] cluster.

The catalysed reaction is isopentenyl diphosphate + 2 oxidized [2Fe-2S]-[ferredoxin] + H2O = (2E)-4-hydroxy-3-methylbut-2-enyl diphosphate + 2 reduced [2Fe-2S]-[ferredoxin] + 2 H(+). It catalyses the reaction dimethylallyl diphosphate + 2 oxidized [2Fe-2S]-[ferredoxin] + H2O = (2E)-4-hydroxy-3-methylbut-2-enyl diphosphate + 2 reduced [2Fe-2S]-[ferredoxin] + 2 H(+). The protein operates within isoprenoid biosynthesis; dimethylallyl diphosphate biosynthesis; dimethylallyl diphosphate from (2E)-4-hydroxy-3-methylbutenyl diphosphate: step 1/1. It functions in the pathway isoprenoid biosynthesis; isopentenyl diphosphate biosynthesis via DXP pathway; isopentenyl diphosphate from 1-deoxy-D-xylulose 5-phosphate: step 6/6. Catalyzes the conversion of 1-hydroxy-2-methyl-2-(E)-butenyl 4-diphosphate (HMBPP) into a mixture of isopentenyl diphosphate (IPP) and dimethylallyl diphosphate (DMAPP). Acts in the terminal step of the DOXP/MEP pathway for isoprenoid precursor biosynthesis. In Photobacterium profundum (strain SS9), this protein is 4-hydroxy-3-methylbut-2-enyl diphosphate reductase.